The sequence spans 376 residues: Chorismate synthase (376 aa).

2 residues coordinate NADP(+): arginine 39 and arginine 45. Residues arginine 115–serine 117, glycine 276, lysine 291–threonine 295, and arginine 317 contribute to the FMN site.

It belongs to the chorismate synthase family. In terms of assembly, homotetramer. FMNH2 serves as cofactor.

The catalysed reaction is 5-O-(1-carboxyvinyl)-3-phosphoshikimate = chorismate + phosphate. It participates in metabolic intermediate biosynthesis; chorismate biosynthesis; chorismate from D-erythrose 4-phosphate and phosphoenolpyruvate: step 7/7. Its function is as follows. Catalyzes the anti-1,4-elimination of the C-3 phosphate and the C-6 proR hydrogen from 5-enolpyruvylshikimate-3-phosphate (EPSP) to yield chorismate, which is the branch point compound that serves as the starting substrate for the three terminal pathways of aromatic amino acid biosynthesis. This reaction introduces a second double bond into the aromatic ring system. This Thermotoga sp. (strain RQ2) protein is Chorismate synthase.